Reading from the N-terminus, the 632-residue chain is DNA polymerase eta (632 aa).

One can recognise a UmuC domain in the interval 26 to 309 (IAHIDMNAFF…FEITSFWTLG (284 aa)). Mg(2+)-binding residues include D30 and D155. The UBZ3-type zinc finger occupies 545-580 (EKTPKLECCKYQVTFTDQKALQEHADYHLALKLSEG). 4 residues coordinate Zn(2+): C552, C553, H568, and H572. The disordered stretch occupies residues 598–632 (LLFSRKRPNSQHTATPQKKQVTSSKNILSFFTRKK). The span at 607-626 (SQHTATPQKKQVTSSKNILS) shows a compositional bias: polar residues. The segment at 625–632 (LSFFTRKK) is POL30-binding.

Belongs to the DNA polymerase type-Y family. Interacts with POL30. This interaction is essential for the polymerase eta function.

It is found in the nucleus. The enzyme catalyses DNA(n) + a 2'-deoxyribonucleoside 5'-triphosphate = DNA(n+1) + diphosphate. Functionally, DNA polymerase specifically involved in DNA repair. Plays an important role in translesion synthesis, where the normal high fidelity DNA polymerases cannot proceed and DNA synthesis stalls. Plays an important role in the repair of UV-induced pyrimidine dimers. Depending on the context, it inserts the correct base, but causes frequent base transitions and transversions. Efficiently incorporates nucleotides opposite to other UV or oxidative DNA damages like O(6)-methylguanine, 7,8-dihydro-8-oxoguanine, 2,6-diamino-4-hydroxy-5-formamidopyrimidine of 2'-deoxyguanosine (FaPydG), or p-benzoquinone DNA adducts. The protein is DNA polymerase eta (RAD30) of Saccharomyces cerevisiae (strain ATCC 204508 / S288c) (Baker's yeast).